A 189-amino-acid chain; its full sequence is Nucleoside diphosphate kinase 6 (189 aa).

6 residues coordinate ATP: Lys-19, Phe-68, Arg-96, Thr-102, Arg-116, and Asn-126. The Pros-phosphohistidine intermediate role is filled by His-129.

This sequence belongs to the NDK family. Mg(2+) serves as cofactor.

The catalysed reaction is a 2'-deoxyribonucleoside 5'-diphosphate + ATP = a 2'-deoxyribonucleoside 5'-triphosphate + ADP. It catalyses the reaction a ribonucleoside 5'-diphosphate + ATP = a ribonucleoside 5'-triphosphate + ADP. Its function is as follows. Major role in the synthesis of nucleoside triphosphates other than ATP. The ATP gamma phosphate is transferred to the NDP beta phosphate via a ping-pong mechanism, using a phosphorylated active-site intermediate. The chain is Nucleoside diphosphate kinase 6 (Nme6) from Mus musculus (Mouse).